Reading from the N-terminus, the 849-residue chain is Protein translocase subunit SecA (849 aa).

ATP contacts are provided by residues Q85, 103 to 107, and D493; that span reads GEGKT. Zn(2+) is bound by residues C832, C834, C843, and H844.

The protein belongs to the SecA family. In terms of assembly, monomer and homodimer. Part of the essential Sec protein translocation apparatus which comprises SecA, SecYEG and auxiliary proteins SecDF. Other proteins may also be involved. Zn(2+) is required as a cofactor.

It is found in the cell membrane. The protein localises to the cytoplasm. The catalysed reaction is ATP + H2O + cellular proteinSide 1 = ADP + phosphate + cellular proteinSide 2.. Its function is as follows. Part of the Sec protein translocase complex. Interacts with the SecYEG preprotein conducting channel. Has a central role in coupling the hydrolysis of ATP to the transfer of proteins into and across the cell membrane, serving as an ATP-driven molecular motor driving the stepwise translocation of polypeptide chains across the membrane. The polypeptide is Protein translocase subunit SecA (Streptococcus thermophilus (strain ATCC BAA-250 / LMG 18311)).